Reading from the N-terminus, the 501-residue chain is Glucans biosynthesis protein G (501 aa).

A signal peptide spans 1–24; the sequence is MNRRQVLAALAAIPLLPEAFPANA.

Belongs to the OpgD/OpgG family.

It is found in the periplasm. It functions in the pathway glycan metabolism; osmoregulated periplasmic glucan (OPG) biosynthesis. Involved in the biosynthesis of osmoregulated periplasmic glucans (OPGs). The sequence is that of Glucans biosynthesis protein G from Rhodopseudomonas palustris (strain BisA53).